The primary structure comprises 453 residues: Ribosome biogenesis protein SSF1 (453 aa).

Residues 1 to 11 are compositionally biased toward basic residues; the sequence is MAKRRQKKRTH. Disordered stretches follow at residues 1 to 22, 275 to 324, and 374 to 453; these read MAKR…EQGI, KAKH…PRKK, and KMRL…SEVE. The Brix domain occupies 26–348; sequence MVIRVGQTSL…LVKIEEGICS (323 aa). Basic and acidic residues predominate over residues 288–300; sequence PVEKKDNKEREKE. Phosphothreonine is present on T301. The span at 374–398 shows a compositional bias: basic and acidic residues; it reads KMRLKEQRKKEQEENIAKKKAVKDA. The segment covering 399 to 409 has biased composition (basic residues); that stretch reads KKQRKLERRKA. The span at 410–423 shows a compositional bias: basic and acidic residues; it reads RAAEGGEGQGKDDA. A compositionally biased stretch (acidic residues) spans 442-453; it reads EDLDSDLFSEVE.

In terms of assembly, part of a complex that includes BRX1, RPF1, RPF2 and SSF1 or SSF2.

It is found in the nucleus. It localises to the nucleolus. Required for biogenesis of the 60S ribosomal subunit. The polypeptide is Ribosome biogenesis protein SSF1 (SSF1) (Saccharomyces cerevisiae (strain ATCC 204508 / S288c) (Baker's yeast)).